We begin with the raw amino-acid sequence, 91 residues long: UPF0250 protein Lcho_4239 (91 aa).

The protein belongs to the UPF0250 family.

This is UPF0250 protein Lcho_4239 from Leptothrix cholodnii (strain ATCC 51168 / LMG 8142 / SP-6) (Leptothrix discophora (strain SP-6)).